Reading from the N-terminus, the 781-residue chain is ATP-dependent 6-phosphofructokinase (781 aa).

The segment at Met1–Lys394 is N-terminal catalytic PFK domain 1. Residues Gly27, Arg90–Cys91, and Gly120–Ser123 contribute to the ATP site. Asp121 is a binding site for Mg(2+). Residues Ser166–Asp168, Arg203, Met210–Arg212, Glu266, Arg294, and His300–Arg303 contribute to the substrate site. The active-site Proton acceptor is the Asp168. An interdomain linker region spans residues Ile395–Leu409. The interval Arg410–Lys781 is C-terminal regulatory PFK domain 2. Residues Arg479, Thr537–Asn541, Arg575, Met582–Gly584, Asp638, Arg664, His670–Gln673, and Arg745 contribute to the beta-D-fructose 2,6-bisphosphate site.

This sequence belongs to the phosphofructokinase type A (PFKA) family. ATP-dependent PFK group I subfamily. Eukaryotic two domain clade 'E' sub-subfamily. As to quaternary structure, homotetramer. The cofactor is Mg(2+).

The protein localises to the cytoplasm. It carries out the reaction beta-D-fructose 6-phosphate + ATP = beta-D-fructose 1,6-bisphosphate + ADP + H(+). It functions in the pathway carbohydrate degradation; glycolysis; D-glyceraldehyde 3-phosphate and glycerone phosphate from D-glucose: step 3/4. With respect to regulation, allosterically activated by ADP, AMP, or fructose 2,6-bisphosphate, and allosterically inhibited by ATP or citrate. Catalyzes the phosphorylation of D-fructose 6-phosphate to fructose 1,6-bisphosphate by ATP, the first committing step of glycolysis. In Schistosoma mansoni (Blood fluke), this protein is ATP-dependent 6-phosphofructokinase (PFK).